Consider the following 319-residue polypeptide: Inositol phosphoceramide mannosyltransferase 1 (319 aa).

Residues 8-28 (LLLKGIPICGVILLILWGYSL) form a helical membrane-spanning segment. N-linked (GlcNAc...) asparagine glycosylation is found at Asn-115 and Asn-198. Helical transmembrane passes span 211 to 231 (PTVF…KYLL) and 279 to 299 (VLFF…RVVF).

The protein belongs to the glycosyltransferase 32 family.

It is found in the golgi apparatus. The protein resides in the cis-Golgi network membrane. It localises to the trans-Golgi network membrane. Functionally, with imt2 and imt3, is required for the synthesis of mannosyl phosphorylinositol ceramide (MIPC). Catalyzes the addition of mannosyl to phosphorylinositol ceramide (IPC). MIPC is essential for cell morphology, cell-surface distribution of ergosterol, localization for plasma-membrane transporters, and lipid-raft-mediated endocytosis of plasma membrane proteins to the vacuole. The protein is Inositol phosphoceramide mannosyltransferase 1 (imt1) of Schizosaccharomyces pombe (strain 972 / ATCC 24843) (Fission yeast).